A 343-amino-acid chain; its full sequence is MSYPERKRKRSRWSKPHSTQNPSPSLPDDVLLSIFARVSRLYYPTLSHVSESFRSLLASPELYKARSLSGNTEICLYVCLRCSTGYRWFSLSRKPDQTLTYEERKSSGYALARVPIPGGSPNVRSSSLVAVGSDIYNICGSINKASSSSSVSILDCQSHTWREAPSLPVELSSISASVRDGNQGGHGYSDSRKNSFKVFAYNSKEGRWDHLVGLGAGSFMLPDSYCVIDNVSYSVSDGMFRWYDTEVRRWKDLRGLFQLPKFSAGACVILADYGGKMAVLWDQLPYHHGFHKTIQCAVIALERRTSFVFREKSCQIWGKVEWVDDLLTVPTSYDLVKVLVATL.

The segment covering 1–15 (MSYPERKRKRSRWSK) has biased composition (basic residues). The interval 1–25 (MSYPERKRKRSRWSKPHSTQNPSPS) is disordered. Residues 20-66 (QNPSPSLPDDVLLSIFARVSRLYYPTLSHVSESFRSLLASPELYKAR) form the F-box domain. Kelch repeat units lie at residues 134 to 181 (DIYN…VRDG), 183 to 224 (QGGH…LPDS), and 225 to 271 (YCVI…VILA).

The chain is F-box/kelch-repeat protein At3g08810 from Arabidopsis thaliana (Mouse-ear cress).